A 523-amino-acid chain; its full sequence is WD repeat-containing protein YPL247C (523 aa).

The segment at 1-64 (MDPFHNGNKR…TTNGGNSKRN (64 aa)) is disordered. A compositionally biased stretch (polar residues) spans 9-40 (KRSSISFGSSQRQPYNKNNYLSGTNGPSSAAQ). At Ser-47 the chain carries Phosphoserine. Positions 52-64 (SGNTTNGGNSKRN) are enriched in low complexity. The residue at position 65 (Ser-65) is a Phosphoserine. WD repeat units follow at residues 173-213 (DVVY…RQFQ), 241-281 (GTFP…YVKT), 285-325 (AHDS…HSTI), and 392-432 (GHGS…MEIN). The disordered stretch occupies residues 436–472 (SKSPSIHGTSLEDPDGDTEMTDGGAGSGLNEDPLSLN).

The protein belongs to the WD repeat WDR68 family.

It is found in the cytoplasm. Its subcellular location is the nucleus. This chain is WD repeat-containing protein YPL247C, found in Saccharomyces cerevisiae (strain ATCC 204508 / S288c) (Baker's yeast).